Consider the following 361-residue polypeptide: Peptide chain release factor 1 (361 aa).

At Gln-237 the chain carries N5-methylglutamine. The disordered stretch occupies residues 286-306 (AKQDQEQAAKRKSLVGSGDRS).

It belongs to the prokaryotic/mitochondrial release factor family. Methylated by PrmC. Methylation increases the termination efficiency of RF1.

The protein localises to the cytoplasm. Functionally, peptide chain release factor 1 directs the termination of translation in response to the peptide chain termination codons UAG and UAA. This Coxiella burnetii (strain CbuK_Q154) (Coxiella burnetii (strain Q154)) protein is Peptide chain release factor 1.